The primary structure comprises 155 residues: Sweet protein mabinlin-2 (155 aa).

Residues 1–20 form the signal peptide; it reads MAKLIFLFATLALFVLLANA. Positions 21–35 are excised as a propeptide; the sequence is SIQTTVIEVDEEEDN. Gln-36 is subject to Pyrrolidone carboxylic acid. Disulfide bonds link Cys-40/Cys-103, Cys-53/Cys-92, Cys-93/Cys-141, and Cys-105/Cys-149. The disordered stretch occupies residues 64–86; that stretch reads GGQPDELEDEVEDDNDDENQPRR. Residues 68-81 show a composition bias toward acidic residues; that stretch reads DELEDEVEDDNDDE. The propeptide occupies 69–82; it reads ELEDEVEDDNDDEN. Position 83 is a pyrrolidone carboxylic acid (Gln-83). A propeptide is located at residue Pro-155.

The protein belongs to the 2S seed storage albumins family. As to quaternary structure, heterodimer of a small A and a large B chain linked by disulfide bonds.

Functionally, heat stable 2S seed storage protein having sweetness-inducing activity. The chain is Sweet protein mabinlin-2 from Capparis masaikai (Mabinlang).